The sequence spans 589 residues: Aspartate--tRNA ligase (589 aa).

Glutamate 175 lines the L-aspartate pocket. The interval 199–202 (QIFK) is aspartate. Residue arginine 221 participates in L-aspartate binding. ATP-binding positions include 221–223 (RDE) and glutamine 230. Histidine 449 contributes to the L-aspartate binding site. Residue glutamate 483 participates in ATP binding. Residue arginine 490 participates in L-aspartate binding. An ATP-binding site is contributed by 535–538 (GLDR).

This sequence belongs to the class-II aminoacyl-tRNA synthetase family. Type 1 subfamily. In terms of assembly, homodimer.

The protein resides in the cytoplasm. The catalysed reaction is tRNA(Asp) + L-aspartate + ATP = L-aspartyl-tRNA(Asp) + AMP + diphosphate. Its function is as follows. Catalyzes the attachment of L-aspartate to tRNA(Asp) in a two-step reaction: L-aspartate is first activated by ATP to form Asp-AMP and then transferred to the acceptor end of tRNA(Asp). The protein is Aspartate--tRNA ligase of Shouchella clausii (strain KSM-K16) (Alkalihalobacillus clausii).